The following is a 100-amino-acid chain: Ubiquinol-cytochrome-C reductase complex subunit IX, mitochondrial (100 aa).

Residues 1–30 (MQTHVRRVALQALRPCLRAGLMAPKFPVRF) constitute a mitochondrion transit peptide. A helical membrane pass occupies residues 66 to 86 (LLMRLFFAFVAYVVAMKVFGA).

In terms of assembly, plants bc1 complex contains 10 subunits; 3 respiratory subunits, 2 core proteins and 5 low-molecular weight proteins.

Its subcellular location is the mitochondrion inner membrane. This is a component of the ubiquinol-cytochrome c reductase complex (complex III or cytochrome b-c1 complex), which is part of the mitochondrial respiratory chain. The polypeptide is Ubiquinol-cytochrome-C reductase complex subunit IX, mitochondrial (Euglena gracilis).